A 385-amino-acid chain; its full sequence is Chaperone protein DnaJ (385 aa).

The region spanning 5–70 (DYYEVLGVAK…QKRAAYDRYG (66 aa)) is the J domain. The CR-type zinc finger occupies 145-223 (GFDTEIRVPS…CDGVGRTRRN (79 aa)). Cys158, Cys161, Cys175, Cys178, Cys197, Cys200, Cys211, and Cys214 together coordinate Zn(2+). CXXCXGXG motif repeat units follow at residues 158-165 (CDTCHGSG), 175-182 (CRTCGGSG), 197-204 (CPTCHGTG), and 211-218 (CPSCDGVG).

Belongs to the DnaJ family. Homodimer. Zn(2+) is required as a cofactor.

It localises to the cytoplasm. Functionally, participates actively in the response to hyperosmotic and heat shock by preventing the aggregation of stress-denatured proteins and by disaggregating proteins, also in an autonomous, DnaK-independent fashion. Unfolded proteins bind initially to DnaJ; upon interaction with the DnaJ-bound protein, DnaK hydrolyzes its bound ATP, resulting in the formation of a stable complex. GrpE releases ADP from DnaK; ATP binding to DnaK triggers the release of the substrate protein, thus completing the reaction cycle. Several rounds of ATP-dependent interactions between DnaJ, DnaK and GrpE are required for fully efficient folding. Also involved, together with DnaK and GrpE, in the DNA replication of plasmids through activation of initiation proteins. The protein is Chaperone protein DnaJ of Bordetella pertussis (strain Tohama I / ATCC BAA-589 / NCTC 13251).